Consider the following 334-residue polypeptide: Holliday junction branch migration complex subunit RuvB (334 aa).

A large ATPase domain (RuvB-L) region spans residues 4 to 184 (ADRIISASPQ…FGIVQRLEFY (181 aa)). ATP-binding positions include Ile-23, Arg-24, Gly-65, Lys-68, Thr-69, Thr-70, 131 to 133 (EDY), Arg-174, Tyr-184, and Arg-221. Position 69 (Thr-69) interacts with Mg(2+). The small ATPAse domain (RuvB-S) stretch occupies residues 185–255 (NVDDLTSIVK…IAKQALVMLD (71 aa)). The segment at 258-334 (PQGFDFMDIK…YAHLGISLSE (77 aa)) is head domain (RuvB-H). 3 residues coordinate DNA: Arg-294, Arg-313, and Arg-318.

This sequence belongs to the RuvB family. As to quaternary structure, homohexamer. Forms an RuvA(8)-RuvB(12)-Holliday junction (HJ) complex. HJ DNA is sandwiched between 2 RuvA tetramers; dsDNA enters through RuvA and exits via RuvB. An RuvB hexamer assembles on each DNA strand where it exits the tetramer. Each RuvB hexamer is contacted by two RuvA subunits (via domain III) on 2 adjacent RuvB subunits; this complex drives branch migration. In the full resolvosome a probable DNA-RuvA(4)-RuvB(12)-RuvC(2) complex forms which resolves the HJ.

Its subcellular location is the cytoplasm. It carries out the reaction ATP + H2O = ADP + phosphate + H(+). Functionally, the RuvA-RuvB-RuvC complex processes Holliday junction (HJ) DNA during genetic recombination and DNA repair, while the RuvA-RuvB complex plays an important role in the rescue of blocked DNA replication forks via replication fork reversal (RFR). RuvA specifically binds to HJ cruciform DNA, conferring on it an open structure. The RuvB hexamer acts as an ATP-dependent pump, pulling dsDNA into and through the RuvAB complex. RuvB forms 2 homohexamers on either side of HJ DNA bound by 1 or 2 RuvA tetramers; 4 subunits per hexamer contact DNA at a time. Coordinated motions by a converter formed by DNA-disengaged RuvB subunits stimulates ATP hydrolysis and nucleotide exchange. Immobilization of the converter enables RuvB to convert the ATP-contained energy into a lever motion, pulling 2 nucleotides of DNA out of the RuvA tetramer per ATP hydrolyzed, thus driving DNA branch migration. The RuvB motors rotate together with the DNA substrate, which together with the progressing nucleotide cycle form the mechanistic basis for DNA recombination by continuous HJ branch migration. Branch migration allows RuvC to scan DNA until it finds its consensus sequence, where it cleaves and resolves cruciform DNA. In Haemophilus ducreyi (strain 35000HP / ATCC 700724), this protein is Holliday junction branch migration complex subunit RuvB.